The chain runs to 229 residues: 1-Cys peroxiredoxin PER1 (229 aa).

The Thioredoxin domain occupies 4–173 (LTIGDTVPNL…VLRAVDSLLT (170 aa)). Cys46 acts as the Cysteine sulfenic acid (-SOH) intermediate in catalysis. The Bipartite nuclear localization signal signature appears at 205–228 (RKMFPQGFETADLPSKKGYLRFTK).

This sequence belongs to the peroxiredoxin family. Prx6 subfamily.

It localises to the nucleus. The protein localises to the cytoplasm. It catalyses the reaction a hydroperoxide + [thioredoxin]-dithiol = an alcohol + [thioredoxin]-disulfide + H2O. Thiol-specific peroxidase that catalyzes the reduction of hydrogen peroxide and organic hydroperoxides to water and alcohols, respectively. Seems to contribute to the inhibition of germination during stress. This chain is 1-Cys peroxiredoxin PER1 (PER1), found in Zea mays (Maize).